Consider the following 598-residue polypeptide: Protein unc-93 homolog B1 (598 aa).

Residues 1-36 (MEVEPPLYPVAGAAGPQGDEDRHGVPDGPEAPLDEL) are disordered. The next 5 helical transmembrane spans lie at 64–84 (VLAA…LLQM), 110–130 (KMLM…PVLI), 132–152 (FFGT…FVST), 160–180 (TLVP…ASMG), and 223–243 (IFYS…IYFL). Residues Asn-251 and Asn-272 are each glycosylated (N-linked (GlcNAc...) asparagine). The next 5 helical transmembrane spans lie at 285–305 (LIVV…MVLG), 343–363 (LVPF…GFAL), 378–398 (LLIA…LGLW), 403–423 (VPLV…FFWA), and 428–448 (VLQH…GSAL). Residue Asn-449 is glycosylated (N-linked (GlcNAc...) asparagine). The next 2 membrane-spanning stretches (helical) occupy residues 469–489 (FIFT…YLGS) and 495–515 (AKLA…LWME). A disordered region spans residues 524–598 (PRQPRIPKPQ…ALGGDGPEEQ (75 aa)). Residues 544–554 (EDNSDESDMEG) show a composition bias toward acidic residues. Residues Ser-547 and Ser-550 each carry the phosphoserine modification.

It belongs to the unc-93 family. In terms of assembly, interacts with TLR3, TLR5, TLR7, TLR8, TLR9 and TLR13 (probably via transmembrane domain). In terms of processing, N-glycosylated.

The protein localises to the endoplasmic reticulum membrane. Its subcellular location is the endosome. It is found in the lysosome. It localises to the cytoplasmic vesicle. The protein resides in the phagosome. Its function is as follows. Plays an important role in innate and adaptive immunity by regulating nucleotide-sensing Toll-like receptor (TLR) signaling. Required for the transport of a subset of TLRs (including TLR3, TLR7 and TLR9) from the endoplasmic reticulum to endolysosomes where they can engage pathogen nucleotides and activate signaling cascades. May play a role in autoreactive B-cells removal. This chain is Protein unc-93 homolog B1, found in Mus musculus (Mouse).